A 180-amino-acid polypeptide reads, in one-letter code: MASMSNITPDIIVNAQINSEDENVLDFIIEDEYYLKKRGVGAHIIKVASSPQLRLLYKNAYSTVSCGNYGVLCNLVQNGEYDLNAIMFNCAEIKLNKGQMLFQTKIWRSDNSKTDAAVHTSSPKRTVETENDDDGEAASAAAIDEQEGNADVVGLDFEENIDDGDAPTPKKQKLDNAKQD.

A disordered region spans residues 112-180; sequence SKTDAAVHTS…KQKLDNAKQD (69 aa). Residues 156–165 show a composition bias toward acidic residues; it reads DFEENIDDGD.

The protein is Telokin-like protein 20 (TLP20) of Lepidoptera (butterflies and moths).